A 338-amino-acid polypeptide reads, in one-letter code: tRNA pseudouridine synthase D (338 aa).

Residue Asp79 is the Nucleophile of the active site. The TRUD domain maps to 154–303; it reads GVPNYFGEQR…EEAWRANILY (150 aa).

Belongs to the pseudouridine synthase TruD family.

It carries out the reaction uridine(13) in tRNA = pseudouridine(13) in tRNA. Its function is as follows. Responsible for synthesis of pseudouridine from uracil-13 in transfer RNAs. The chain is tRNA pseudouridine synthase D from Legionella pneumophila (strain Lens).